The following is a 492-amino-acid chain: 3-octaprenyl-4-hydroxybenzoate carboxy-lyase (492 aa).

Position 175 (Asn175) interacts with Mn(2+). Prenylated FMN contacts are provided by residues 178–180 (IYR), 192–194 (RWL), and 197–198 (RG). A Mn(2+)-binding site is contributed by Glu241. The active-site Proton donor is the Asp290.

This sequence belongs to the UbiD family. As to quaternary structure, homohexamer. The cofactor is prenylated FMN. Requires Mn(2+) as cofactor.

The protein localises to the cell membrane. The catalysed reaction is a 4-hydroxy-3-(all-trans-polyprenyl)benzoate + H(+) = a 2-(all-trans-polyprenyl)phenol + CO2. The protein operates within cofactor biosynthesis; ubiquinone biosynthesis. Catalyzes the decarboxylation of 3-octaprenyl-4-hydroxy benzoate to 2-octaprenylphenol, an intermediate step in ubiquinone biosynthesis. The chain is 3-octaprenyl-4-hydroxybenzoate carboxy-lyase from Salmonella typhimurium (strain LT2 / SGSC1412 / ATCC 700720).